We begin with the raw amino-acid sequence, 147 residues long: 3-dehydroquinate dehydratase (147 aa).

Tyr-23 functions as the Proton acceptor in the catalytic mechanism. Substrate contacts are provided by Asn-75, His-81, and Asp-88. His-101 (proton donor) is an active-site residue. Residues 102–103 (LS) and Arg-112 contribute to the substrate site.

The protein belongs to the type-II 3-dehydroquinase family. Homododecamer.

It carries out the reaction 3-dehydroquinate = 3-dehydroshikimate + H2O. The protein operates within metabolic intermediate biosynthesis; chorismate biosynthesis; chorismate from D-erythrose 4-phosphate and phosphoenolpyruvate: step 3/7. Its function is as follows. Catalyzes a trans-dehydration via an enolate intermediate. This chain is 3-dehydroquinate dehydratase, found in Thioalkalivibrio sulfidiphilus (strain HL-EbGR7).